A 67-amino-acid polypeptide reads, in one-letter code: Large ribosomal subunit protein bL35 (67 aa).

The protein belongs to the bacterial ribosomal protein bL35 family.

This chain is Large ribosomal subunit protein bL35, found in Acidiphilium cryptum (strain JF-5).